We begin with the raw amino-acid sequence, 152 residues long: Small ribosomal subunit protein uS15 (152 aa).

A compositionally biased stretch (basic residues) spans 1–19 (MAKMHTRRKGRSRSTRPVR). The tract at residues 1 to 21 (MAKMHTRRKGRSRSTRPVRKT) is disordered.

The protein belongs to the universal ribosomal protein uS15 family. In terms of assembly, part of the 30S ribosomal subunit.

The chain is Small ribosomal subunit protein uS15 from Methanocella arvoryzae (strain DSM 22066 / NBRC 105507 / MRE50).